A 134-amino-acid polypeptide reads, in one-letter code: Interleukin-5 (134 aa).

The N-terminal stretch at 1 to 19 (MRMLLHLSLLALGAAYVSA) is a signal peptide. 2 N-linked (GlcNAc...) asparagine glycosylation sites follow: Asn76 and Asn90.

It belongs to the IL-5 family. As to quaternary structure, homodimer; disulfide-linked. Interacts with IL5RA. Interacts with CSF2RB.

It localises to the secreted. Its function is as follows. Homodimeric cytokine expressed predominantly by T-lymphocytes and NK cells that plays an important role in the survival, differentiation, and chemotaxis of eosinophils. Also acts on activated and resting B-cells to induce immunoglobulin production, growth, and differentiation. Mechanistically, exerts its biological effects through a receptor composed of IL5RA subunit and the cytokine receptor common subunit beta/CSF2RB. Binding to the receptor leads to activation of various kinases including LYN, SYK and JAK2 and thereby propagates signals through the RAS-MAPK and JAK-STAT5 pathways respectively. The chain is Interleukin-5 (IL5) from Felis catus (Cat).